A 352-amino-acid chain; its full sequence is Rhodopsin (352 aa).

Residues 1-36 lie on the Extracellular side of the membrane; the sequence is MNGTEGPDFYIPFSNKTGVVRSPFEYPQYYLAEPWK. N-linked (GlcNAc...) asparagine glycosylation is found at N2 and N15. The chain crosses the membrane as a helical span at residues 37 to 61; sequence YSALAAYMFMLIILGFPINFLTLYV. Over 62–73 the chain is Cytoplasmic; it reads TVQHKKLRSPLN. Residues 74-96 form a helical membrane-spanning segment; that stretch reads YILLNLAVADLFMVLGGFTTTLY. Topologically, residues 97–110 are extracellular; that stretch reads TSMNGYFVFGVTGC. A disulfide bond links C110 and C187. A helical membrane pass occupies residues 111-133; sequence YFEGFFATLGGEVALWCLVVLAI. The short motif at 134–136 is the 'Ionic lock' involved in activated form stabilization element; sequence ERY. At 134-152 the chain is on the cytoplasmic side; sequence ERYIVVCKPMSNFRFGENH. Residues 153 to 173 traverse the membrane as a helical segment; the sequence is AIMGVVFTWIMALTCAAPPLV. Residues 174–202 lie on the Extracellular side of the membrane; the sequence is GWSRYIPEGMQCSCGVDYYTLKPEVNNES. A helical transmembrane segment spans residues 203 to 224; sequence FVIYMFVVHFAIPLAVIFFCYG. Residues 225 to 252 lie on the Cytoplasmic side of the membrane; it reads RLVCTVKEAAAQQQESATTQKAEKEVTR. Residues 253–274 form a helical membrane-spanning segment; that stretch reads MVIIMVVSFLICWVPYASVAFY. Topologically, residues 275–286 are extracellular; sequence IFSNQGSDFGPV. A helical transmembrane segment spans residues 287–308; that stretch reads FMTIPAFFAKSSAIYNPVIYIV. Position 296 is an N6-(retinylidene)lysine (K296). Topologically, residues 309–352 are cytoplasmic; it reads MNKQFRNCMITTLCCGKNPLGDDETATGSKTETSSVSTSQVSPA. 2 S-palmitoyl cysteine lipidation sites follow: C322 and C323. Positions 332 to 352 are disordered; that stretch reads ETATGSKTETSSVSTSQVSPA. Residues 335 to 352 show a composition bias toward low complexity; that stretch reads TGSKTETSSVSTSQVSPA.

The protein belongs to the G-protein coupled receptor 1 family. Opsin subfamily. Contains one covalently linked retinal chromophore. Upon light absorption, the covalently bound 11-cis-retinal is converted to all-trans-retinal. After hydrolysis of the Schiff base and release of the covalently bound all-trans-retinal, active rhodopsin is regenerated by binding of a fresh molecule of 11-cis-retinal. As to expression, expressed in rod-shaped photoreceptor cells in the retina that mediate vision in dim ligh (at protein level).

Its subcellular location is the membrane. It localises to the cell projection. The protein resides in the cilium. It is found in the photoreceptor outer segment. Its function is as follows. Photoreceptor required for image-forming vision at low light intensity. Required for photoreceptor cell viability after birth. Light-induced isomerization of 11-cis to all-trans retinal triggers a conformational change that activates signaling via G-proteins. Subsequent receptor phosphorylation mediates displacement of the bound G-protein alpha subunit by arrestin and terminates signaling. This is Rhodopsin (RHO) from Alligator mississippiensis (American alligator).